The following is a 100-amino-acid chain: Urease subunit gamma (100 aa).

Belongs to the urease gamma subunit family. Heterotrimer of UreA (gamma), UreB (beta) and UreC (alpha) subunits. Three heterotrimers associate to form the active enzyme.

It is found in the cytoplasm. The enzyme catalyses urea + 2 H2O + H(+) = hydrogencarbonate + 2 NH4(+). It functions in the pathway nitrogen metabolism; urea degradation; CO(2) and NH(3) from urea (urease route): step 1/1. The chain is Urease subunit gamma from Opitutus terrae (strain DSM 11246 / JCM 15787 / PB90-1).